A 291-amino-acid polypeptide reads, in one-letter code: NAD kinase (291 aa).

The active-site Proton acceptor is Asp73. NAD(+) is bound by residues 73-74 (DG), 147-148 (ND), Arg175, Asp177, and Gln246.

It belongs to the NAD kinase family. A divalent metal cation is required as a cofactor.

It is found in the cytoplasm. The catalysed reaction is NAD(+) + ATP = ADP + NADP(+) + H(+). Its function is as follows. Involved in the regulation of the intracellular balance of NAD and NADP, and is a key enzyme in the biosynthesis of NADP. Catalyzes specifically the phosphorylation on 2'-hydroxyl of the adenosine moiety of NAD to yield NADP. The protein is NAD kinase of Laribacter hongkongensis (strain HLHK9).